Consider the following 159-residue polypeptide: SsrA-binding protein (159 aa).

Positions 131-159 (KGKKLHDKRESEKERDWNRQKSRLLKDNG) are disordered. Positions 137–159 (DKRESEKERDWNRQKSRLLKDNG) are enriched in basic and acidic residues.

Belongs to the SmpB family.

The protein resides in the cytoplasm. Functionally, required for rescue of stalled ribosomes mediated by trans-translation. Binds to transfer-messenger RNA (tmRNA), required for stable association of tmRNA with ribosomes. tmRNA and SmpB together mimic tRNA shape, replacing the anticodon stem-loop with SmpB. tmRNA is encoded by the ssrA gene; the 2 termini fold to resemble tRNA(Ala) and it encodes a 'tag peptide', a short internal open reading frame. During trans-translation Ala-aminoacylated tmRNA acts like a tRNA, entering the A-site of stalled ribosomes, displacing the stalled mRNA. The ribosome then switches to translate the ORF on the tmRNA; the nascent peptide is terminated with the 'tag peptide' encoded by the tmRNA and targeted for degradation. The ribosome is freed to recommence translation, which seems to be the essential function of trans-translation. This chain is SsrA-binding protein, found in Rhizobium leguminosarum bv. trifolii (strain WSM2304).